We begin with the raw amino-acid sequence, 361 residues long: Peptide chain release factor 1 (361 aa).

At Gln235 the chain carries N5-methylglutamine.

This sequence belongs to the prokaryotic/mitochondrial release factor family. Methylated by PrmC. Methylation increases the termination efficiency of RF1.

The protein resides in the cytoplasm. In terms of biological role, peptide chain release factor 1 directs the termination of translation in response to the peptide chain termination codons UAG and UAA. This is Peptide chain release factor 1 from Xanthomonas campestris pv. campestris (strain 8004).